A 350-amino-acid chain; its full sequence is 4-hydroxy-3-methylbut-2-enyl diphosphate reductase (350 aa).

C36 contacts [4Fe-4S] cluster. (2E)-4-hydroxy-3-methylbut-2-enyl diphosphate-binding residues include H65 and H101. H65 and H101 together coordinate dimethylallyl diphosphate. Isopentenyl diphosphate contacts are provided by H65 and H101. C123 is a [4Fe-4S] cluster binding site. (2E)-4-hydroxy-3-methylbut-2-enyl diphosphate is bound at residue H151. Residue H151 participates in dimethylallyl diphosphate binding. H151 serves as a coordination point for isopentenyl diphosphate. E153 serves as the catalytic Proton donor. T192 contributes to the (2E)-4-hydroxy-3-methylbut-2-enyl diphosphate binding site. C222 serves as a coordination point for [4Fe-4S] cluster. (2E)-4-hydroxy-3-methylbut-2-enyl diphosphate contacts are provided by S250, S251, N252, and S295. Residues S250, S251, N252, and S295 each coordinate dimethylallyl diphosphate. S250, S251, N252, and S295 together coordinate isopentenyl diphosphate.

The protein belongs to the IspH family. [4Fe-4S] cluster is required as a cofactor.

The enzyme catalyses isopentenyl diphosphate + 2 oxidized [2Fe-2S]-[ferredoxin] + H2O = (2E)-4-hydroxy-3-methylbut-2-enyl diphosphate + 2 reduced [2Fe-2S]-[ferredoxin] + 2 H(+). It carries out the reaction dimethylallyl diphosphate + 2 oxidized [2Fe-2S]-[ferredoxin] + H2O = (2E)-4-hydroxy-3-methylbut-2-enyl diphosphate + 2 reduced [2Fe-2S]-[ferredoxin] + 2 H(+). It participates in isoprenoid biosynthesis; dimethylallyl diphosphate biosynthesis; dimethylallyl diphosphate from (2E)-4-hydroxy-3-methylbutenyl diphosphate: step 1/1. Its pathway is isoprenoid biosynthesis; isopentenyl diphosphate biosynthesis via DXP pathway; isopentenyl diphosphate from 1-deoxy-D-xylulose 5-phosphate: step 6/6. Catalyzes the conversion of 1-hydroxy-2-methyl-2-(E)-butenyl 4-diphosphate (HMBPP) into a mixture of isopentenyl diphosphate (IPP) and dimethylallyl diphosphate (DMAPP). Acts in the terminal step of the DOXP/MEP pathway for isoprenoid precursor biosynthesis. In Rhizobium meliloti (strain 1021) (Ensifer meliloti), this protein is 4-hydroxy-3-methylbut-2-enyl diphosphate reductase.